The chain runs to 498 residues: Protein flp (498 aa).

4 helical membrane-spanning segments follow: residues 6–26 (LYFL…IYIT), 389–409 (FNIV…FSAY), 433–453 (LSLC…YLIL), and 471–491 (LALI…LLFL).

The protein localises to the cell membrane. Its function is as follows. Its precise function is unknown. Has no penicillin-binding activity and is not involved in methicillin resistance. This chain is Protein flp (flp), found in Staphylococcus aureus (strain COL).